A 375-amino-acid chain; its full sequence is Alcohol dehydrogenase 1 (375 aa).

At serine 2 the chain carries N-acetylserine. The Zn(2+) site is built by cysteine 47, histidine 68, cysteine 98, cysteine 101, cysteine 104, cysteine 112, and cysteine 175. Residues 200 to 205 (WSGRVG), aspartate 224, and lysine 229 each bind NAD(+). Position 234 is an N6-succinyllysine (lysine 234). 293 to 295 (VGV) is an NAD(+) binding site. The residue at position 340 (lysine 340) is an N6-succinyllysine. Arginine 370 provides a ligand contact to NAD(+).

It belongs to the zinc-containing alcohol dehydrogenase family. Class-I subfamily. As to quaternary structure, homodimer. It depends on Zn(2+) as a cofactor.

It is found in the cytoplasm. The enzyme catalyses a primary alcohol + NAD(+) = an aldehyde + NADH + H(+). It catalyses the reaction a secondary alcohol + NAD(+) = a ketone + NADH + H(+). This chain is Alcohol dehydrogenase 1 (ADH1), found in Geomys attwateri (Attwater's pocket gopher).